The chain runs to 190 residues: Crossover junction endodeoxyribonuclease RuvC (190 aa).

Catalysis depends on residues Asp8, Glu67, and Asp139. Mg(2+) is bound by residues Asp8, Glu67, and Asp139.

It belongs to the RuvC family. As to quaternary structure, homodimer which binds Holliday junction (HJ) DNA. The HJ becomes 2-fold symmetrical on binding to RuvC with unstacked arms; it has a different conformation from HJ DNA in complex with RuvA. In the full resolvosome a probable DNA-RuvA(4)-RuvB(12)-RuvC(2) complex forms which resolves the HJ. Mg(2+) is required as a cofactor.

It localises to the cytoplasm. The enzyme catalyses Endonucleolytic cleavage at a junction such as a reciprocal single-stranded crossover between two homologous DNA duplexes (Holliday junction).. Functionally, the RuvA-RuvB-RuvC complex processes Holliday junction (HJ) DNA during genetic recombination and DNA repair. Endonuclease that resolves HJ intermediates. Cleaves cruciform DNA by making single-stranded nicks across the HJ at symmetrical positions within the homologous arms, yielding a 5'-phosphate and a 3'-hydroxyl group; requires a central core of homology in the junction. The consensus cleavage sequence is 5'-(A/T)TT(C/G)-3'. Cleavage occurs on the 3'-side of the TT dinucleotide at the point of strand exchange. HJ branch migration catalyzed by RuvA-RuvB allows RuvC to scan DNA until it finds its consensus sequence, where it cleaves and resolves the cruciform DNA. This chain is Crossover junction endodeoxyribonuclease RuvC, found in Pasteurella multocida (strain Pm70).